The following is a 74-amino-acid chain: Beta-defensin 39 (74 aa).

A signal peptide spans 1–23; it reads MKISYFLLLILSLGSSQINPVSG. 3 cysteine pairs are disulfide-bonded: cysteine 29/cysteine 58, cysteine 36/cysteine 51, and cysteine 41/cysteine 59.

The protein belongs to the beta-defensin family. In terms of tissue distribution, only expressed in epididymis (caput, corpus and cauda).

Its subcellular location is the secreted. In terms of biological role, has antibacterial activity. This chain is Beta-defensin 39 (Defb39), found in Mus musculus (Mouse).